We begin with the raw amino-acid sequence, 315 residues long: Diacylglycerol kinase (315 aa).

In terms of domain architecture, DAGKc spans 1 to 132; sequence MRKRARIIYN…VDIGKMNNRY (132 aa). ATP is bound by residues 10-14, threonine 41, 67-73, and threonine 94; these read NPTSG and GDGTLNE. The Mg(2+) site is built by lysine 213, aspartate 216, and tyrosine 218. Residue glutamate 273 is the Proton acceptor of the active site.

This sequence belongs to the diacylglycerol/lipid kinase family. In terms of assembly, homodimer. It depends on Mg(2+) as a cofactor.

It carries out the reaction a 1,2-diacyl-sn-glycerol + ATP = a 1,2-diacyl-sn-glycero-3-phosphate + ADP + H(+). In terms of biological role, catalyzes the phosphorylation of diacylglycerol (DAG) into phosphatidic acid. Is a key enzyme involved in the production of lipoteichoic acid by reintroducing DAG formed from the breakdown of membrane phospholipids into the phosphatidylglycerol biosynthetic pathway. This Staphylococcus aureus (strain bovine RF122 / ET3-1) protein is Diacylglycerol kinase (dagK).